Reading from the N-terminus, the 473-residue chain is MAKFVLAGRADCPYYAKAELLADYLQKNLPDFRIHKITQHPDIWEEWLKDLCKKNRWSHNKSPIIWRELLDRGGKGLLLGGYNEFLEHAQLYYGVTSSMTTELMKRVAQENLGTHIEKELEKESLKGLVNPLQVWITSASSLACYHLIPILTSGEVFGPQMEISINLFDNKHTEEKLISHKQEAEDLASPCLQSVSICTQAEEAFHGAHVIIILDDHVDKEINSLEDCIRSRAPLCQLYGSLIEKNAHNFAKIIVGGKTFVNLKTALLMKYAPTFAHNIIAVALGVEGQAKAALARKLKITPSCIKDVIIWGNISGNNYVDLRKAKVYRYESAIWGPPHYSRPVLSLLFDREWVNREFVVSLKTLTATGRQFGGMLAAHSIATTLKYWCHGSPPGEIVSLGVLSEGQFGIPKGIVFSMPVKFENGTWVVLTDLKNTEISQQVMTRMANDLIQEQLVALGELANFQPYQSENLI.

It belongs to the LDH/MDH superfamily. MDH type 2 family.

The sequence is that of Putative malate dehydrogenase 1B (MDH1B) from Bos taurus (Bovine).